A 187-amino-acid polypeptide reads, in one-letter code: METLTSSSQSLISSPMSKKDYSSEIICAFDIGAKNPARTVLEVKDNSVRVLDISKLDWSSDWERHIAKDLSQYEYTTVLLERQPRRSPYVKFIYFIKGFLYHTSAAKVICVSPVMSGNSYRDRKKRSVEAFLDWMDTFGLRDSVPDRRKLDDVADSFNLAMRYVLDKWNTNYTPYNRCKSRNYIKKM.

Belongs to the RuvC family. Poxviruses-type subfamily. Mg(2+) is required as a cofactor. Acylated by palmitic acid group(s).

The protein resides in the membrane. Its function is as follows. Nuclease that specifically cleaves and resolves four-way DNA Holliday junctions into linear duplex products. The polypeptide is Holliday junction resolvase (Vaccinia virus (strain Ankara) (VACV)).